We begin with the raw amino-acid sequence, 396 residues long: S-adenosylmethionine synthase (396 aa).

His-14 is a binding site for ATP. Asp-16 serves as a coordination point for Mg(2+). Glu-42 serves as a coordination point for K(+). Glu-55 and Gln-98 together coordinate L-methionine. A flexible loop region spans residues 98-108 (QSPDIAMGVDK). Residues 174–176 (DGK), 240–241 (RF), Asp-249, 255–256 (RK), Ala-272, and Lys-276 each bind ATP. Asp-249 contributes to the L-methionine binding site. Lys-280 provides a ligand contact to L-methionine.

The protein belongs to the AdoMet synthase family. As to quaternary structure, homotetramer; dimer of dimers. Requires Mg(2+) as cofactor. K(+) serves as cofactor.

The protein localises to the cytoplasm. The enzyme catalyses L-methionine + ATP + H2O = S-adenosyl-L-methionine + phosphate + diphosphate. Its pathway is amino-acid biosynthesis; S-adenosyl-L-methionine biosynthesis; S-adenosyl-L-methionine from L-methionine: step 1/1. Catalyzes the formation of S-adenosylmethionine (AdoMet) from methionine and ATP. The overall synthetic reaction is composed of two sequential steps, AdoMet formation and the subsequent tripolyphosphate hydrolysis which occurs prior to release of AdoMet from the enzyme. This is S-adenosylmethionine synthase from Caldicellulosiruptor saccharolyticus (strain ATCC 43494 / DSM 8903 / Tp8T 6331).